A 1807-amino-acid polypeptide reads, in one-letter code: Triacetic acid lactone synthase cle1 (1807 aa).

The 174-residue stretch at 107 to 280 (LAPLTVIIHI…ANVPVNGRYH (174 aa)) folds into the Starter acyltransferase (SAT) domain. The Ketosynthase family 3 (KS3) domain occupies 385–795 (DTSIAIIGAA…GNNTAIIICQ (411 aa)). Catalysis depends on for beta-ketoacyl synthase activity residues C540, H675, and H718. The 258-residue stretch at 919–1176 (SKAVYDSSYH…LGPCIWLEAG (258 aa)) folds into the Malonyl-CoA:ACP transacylase (MAT) domain. The interval 1272–1398 (PVIDGLISLE…GTVIVDDERT (127 aa)) is N-terminal hotdog fold. Positions 1272 to 1573 (PVIDGLISLE…FIRTSTSALQ (302 aa)) constitute a PKS/mFAS DH domain. The active-site Proton acceptor; for dehydratase activity is the H1304. A C-terminal hotdog fold region spans residues 1416–1573 (TVFSAPRGVA…FIRTSTSALQ (158 aa)). Residue D1475 is the Proton donor; for dehydratase activity of the active site. Residues 1605–1679 (ANVWSLTVNL…IICERITAQT (75 aa)) enclose the Carrier 1 domain. S1639 bears the O-(pantetheine 4'-phosphoryl)serine mark. The tract at residues 1690-1720 (GNSTSNTTSSSSQCTPSSSFESDSDTQATEL) is disordered. The segment covering 1692–1710 (STSNTTSSSSQCTPSSSFE) has biased composition (low complexity). One can recognise a Carrier 2 domain in the interval 1721 to 1797 (SLSAPTMEKV…DLHALVMRRG (77 aa)). S1757 is subject to O-(pantetheine 4'-phosphoryl)serine.

It depends on pantetheine 4'-phosphate as a cofactor.

It participates in secondary metabolite biosynthesis; terpenoid biosynthesis. Its function is as follows. Non-reducing polyketide synthase; part of the cluster A that mediates the biosynthesis of chevalone E and its oxidized derivatives that possess a unique five-membered lactone ring and can synergistically enhance the cytotoxicity of doxorubicin (DOX) in breast cancer cells. Within the pathway, cle1 takes part to the biosynthesis of the molecular scaffold via the synthesis the alpha-pyrone triacetic acid lactone (TAL) from one molecule of acetyl-CoA and two molecules of malonyl-CoA. The molecular scaffold is commonly biosynthesized by a series of enzymes including the non-reducing polyketide synthase (NR-PKS) cle1 that produces the alpha-pyrone triacetic acid lactone (TAL); The membrane-bound prenyltransferase cle5 that accepts TAL as its substrate to perform a C-3 geranylgeranylation reaction, in which the pathway-dedicated GGPS cle6 is required to provide GGPP, the other substrate of cle5; the FAD-dependent monooxygenase Cle3 that forms an (S)-epoxide ring at the terminal olefin of the geranylgeranyl group; and the terpene cyclase Cle7 that catalyzes the cyclization of the prenyl group that yields the pentacyclic pathway intermediate chevalone E. Chevalone E can derivatize into seven new oxidized analogs by the cytochrome P450 monooxygenases cle2 (acting at C-20) and cle4 (acting at C-11 and C-12). This Aspergillus versicolor protein is Triacetic acid lactone synthase cle1.